We begin with the raw amino-acid sequence, 714 residues long: Angiogenic factor with G patch and FHA domains 1 (714 aa).

The span at 1–18 (MASEAPSPPRSPPPPTSP) shows a compositional bias: pro residues. Disordered stretches follow at residues 1–22 (MASE…EPEL), 259–307 (QPYP…HTSC), and 322–384 (IGIH…SYDE). Ala-2 is subject to N-acetylalanine. Phosphoserine occurs at positions 7 and 11. The stretch at 18–88 (PEPELAQLRR…QRGRNEDNKK (71 aa)) forms a coiled coil. Residues 279 to 298 (KDPDSSATNEEKDLNSEDQK) show a composition bias toward basic and acidic residues. Positions 335 to 355 (VPTSGNTIESPLHENISNSTS) are enriched in polar residues. Ser-344 carries the phosphoserine modification. Acidic residues predominate over residues 364-383 (TDSEPEEGEITDSQTEDSYD). Positions 434 to 487 (ATIGREKDMEHTLRIPEVGVSKFHAEIYFDHDLQSYVLVDQGSQNGTIVNGKQI) constitute an FHA domain. The segment covering 586 to 609 (KYKDRAGKRREQVGSEGTFQRDDA) has biased composition (basic and acidic residues). Disordered regions lie at residues 586 to 617 (KYKD…HSEI) and 655 to 714 (RTHA…GTLE). One can recognise a G-patch domain in the interval 619 to 665 (DSNKGRKMLEKMGWKKGEGLGKDGGGMKTPIQLQLRRTHAGLGTGKP). N6-acetyllysine is present on Lys-664. The span at 680 to 690 (KNWDKARERFT) shows a compositional bias: basic and acidic residues.

As to quaternary structure, interacts with the secreted angiogenic factor TNFSF12. Widely expressed. Expressed in endothelial cells, vascular smooth muscle cells and osteoblasts. Expressed in umbilical vein endothelial cells and microvascular endothelial cells.

The protein resides in the cytoplasm. It is found in the secreted. Its function is as follows. Promotes angiogenesis and the proliferation of endothelial cells. Able to bind to endothelial cells and promote cell proliferation, suggesting that it may act in an autocrine fashion. The protein is Angiogenic factor with G patch and FHA domains 1 (AGGF1) of Homo sapiens (Human).